A 210-amino-acid chain; its full sequence is Thymidylate kinase (210 aa).

10–17 (GPEGAGKS) contacts ATP.

This sequence belongs to the thymidylate kinase family.

It carries out the reaction dTMP + ATP = dTDP + ADP. Functionally, phosphorylation of dTMP to form dTDP in both de novo and salvage pathways of dTTP synthesis. The sequence is that of Thymidylate kinase from Pseudomonas entomophila (strain L48).